Reading from the N-terminus, the 142-residue chain is Large ribosomal subunit protein uL11 (142 aa).

The protein belongs to the universal ribosomal protein uL11 family. In terms of assembly, part of the ribosomal stalk of the 50S ribosomal subunit. Interacts with L10 and the large rRNA to form the base of the stalk. L10 forms an elongated spine to which L12 dimers bind in a sequential fashion forming a multimeric L10(L12)X complex. Post-translationally, one or more lysine residues are methylated.

Forms part of the ribosomal stalk which helps the ribosome interact with GTP-bound translation factors. The polypeptide is Large ribosomal subunit protein uL11 (Bartonella tribocorum (strain CIP 105476 / IBS 506)).